A 346-amino-acid polypeptide reads, in one-letter code: Enoyl-[acyl-carrier-protein] reductase, mitochondrial (346 aa).

A mitochondrion-targeting transit peptide spans 1 to 22 (MQKTIRSQALIYRKFGDPLKVL). Tyr59 serves as the catalytic Proton donor. NADP(+) contacts are provided by residues Asn131, 157-160 (NSGV), 180-182 (RNR), 249-252 (YGGM), 274-276 (VAV), and Lys332.

This sequence belongs to the zinc-containing alcohol dehydrogenase family. Quinone oxidoreductase subfamily. As to quaternary structure, homodimer.

The protein localises to the mitochondrion. The catalysed reaction is a 2,3-saturated acyl-[ACP] + NADP(+) = a (2E)-enoyl-[ACP] + NADPH + H(+). In terms of biological role, catalyzes the NADPH-dependent reduction of trans-2-enoyl thioesters in mitochondrial fatty acid synthesis (fatty acid synthesis type II). Fatty acid chain elongation in mitochondria uses acyl carrier protein (ACP) as an acyl group carrier, but the enzyme accepts both ACP and CoA thioesters as substrates in vitro. May provide the octanoyl chain used for lipoic acid biosynthesis, regulating protein lipoylation and mitochondrial respiratory activity. Involved in iron homeostasis; affecting Fe-S cluster assembly and ceramide metabolism. Required for proper morphology and bioenergetic functions of mitochondria. Required for maintenance of neurons. This chain is Enoyl-[acyl-carrier-protein] reductase, mitochondrial, found in Caenorhabditis elegans.